A 654-amino-acid polypeptide reads, in one-letter code: Coiled-coil domain-containing protein 30 (654 aa).

The tract at residues 38–65 (TLESRRDPNSSLQKEFPQHQDEDQSRAA) is disordered. A compositionally biased stretch (basic and acidic residues) spans 53–62 (FPQHQDEDQS). Coiled coils occupy residues 97 to 244 (REER…LDNA) and 276 to 559 (KSQQ…QIIR). The disordered stretch occupies residues 614–654 (AAAIPKSPEPLSRSQDSESGYINVTSLKETHNTQGDQKPEL). Over residues 625 to 654 (SRSQDSESGYINVTSLKETHNTQGDQKPEL) the composition is skewed to polar residues.

Belongs to the prefoldin subunit beta family.

The polypeptide is Coiled-coil domain-containing protein 30 (Ccdc30) (Mus musculus (Mouse)).